The primary structure comprises 165 residues: 3-isopropylmalate dehydratase small subunit (165 aa).

This sequence belongs to the LeuD family. LeuD type 2 subfamily. As to quaternary structure, heterodimer of LeuC and LeuD.

It carries out the reaction (2R,3S)-3-isopropylmalate = (2S)-2-isopropylmalate. It functions in the pathway amino-acid biosynthesis; L-leucine biosynthesis; L-leucine from 3-methyl-2-oxobutanoate: step 2/4. Catalyzes the isomerization between 2-isopropylmalate and 3-isopropylmalate, via the formation of 2-isopropylmaleate. The polypeptide is 3-isopropylmalate dehydratase small subunit (Hydrogenobaculum sp. (strain Y04AAS1)).